Consider the following 413-residue polypeptide: Tyrosine--tRNA ligase (413 aa).

The short motif at 59–68 (PTAPDIHLGH) is the 'HIGH' region element. The 'KMSKS' region signature appears at 243 to 247 (KMSKS). Residue K246 coordinates ATP. The S4 RNA-binding domain occupies 351–411 (LAIGQLLKQA…GKRRFARVTL (61 aa)).

Belongs to the class-I aminoacyl-tRNA synthetase family. TyrS type 2 subfamily. Homodimer.

It is found in the cytoplasm. It catalyses the reaction tRNA(Tyr) + L-tyrosine + ATP = L-tyrosyl-tRNA(Tyr) + AMP + diphosphate + H(+). Catalyzes the attachment of tyrosine to tRNA(Tyr) in a two-step reaction: tyrosine is first activated by ATP to form Tyr-AMP and then transferred to the acceptor end of tRNA(Tyr). This chain is Tyrosine--tRNA ligase, found in Burkholderia pseudomallei (strain 1710b).